The sequence spans 183 residues: Large ribosomal subunit protein bL32m (183 aa).

The transit peptide at 1-71 directs the protein to the mitochondrion; the sequence is MNSLIFGKQL…DFFSNNGILL (71 aa). The Zn(2+) site is built by C104, C107, C117, and C120.

The protein belongs to the bacterial ribosomal protein bL32 family. As to quaternary structure, component of the mitochondrial large ribosomal subunit (mt-LSU). Mature yeast 74S mitochondrial ribosomes consist of a small (37S) and a large (54S) subunit. The 37S small subunit contains a 15S ribosomal RNA (15S mt-rRNA) and 34 different proteins. The 54S large subunit contains a 21S rRNA (21S mt-rRNA) and 46 different proteins. bL32m has a zinc binding site. In terms of processing, MRPL32 precursor is processed by the m-AAA protease (composed of YTA12/RCA1 and YTA10/AFG3), which cleaves the N-terminal transit peptide. Cleavage by the m-AAA protease takes place prior to assembly into the large subunit, an essential step for mitochondrial ribosome (mitoribosome) assembly. Proper processing by the m-AAA protease is dependent on the zinc-binding region within the tightly folded C-terminal domain of MRPL32: zinc-dependent folding halts degradation initiated from the N-terminus and triggers the release of mature MRPL32.

The protein resides in the mitochondrion. Component of the mitochondrial ribosome (mitoribosome), a dedicated translation machinery responsible for the synthesis of mitochondrial genome-encoded proteins, including at least some of the essential transmembrane subunits of the mitochondrial respiratory chain. The mitoribosomes are attached to the mitochondrial inner membrane and translation products are cotranslationally integrated into the membrane. This chain is Large ribosomal subunit protein bL32m, found in Saccharomyces cerevisiae (strain ATCC 204508 / S288c) (Baker's yeast).